The following is a 315-amino-acid chain: Transcriptional regulator protein Pur-beta (315 aa).

The tract at residues 1 to 39 (MADGDSGSERGGGGPGSFQPAPRGGGGPGGEQETQELAS) is disordered. Residue Ala-2 is modified to N-acetylalanine. A phosphoserine mark is found at Ser-6 and Ser-8. Arg-23 is subject to Omega-N-methylarginine. A DNA-binding region spans residues 28–254 (PGGEQETQEL…GVFLRVSEVK (227 aa)). Thr-34 carries the post-translational modification Phosphothreonine. Position 104 is a phosphoserine (Ser-104). At Arg-155 the chain carries Omega-N-methylarginine. Positions 200–220 (DDELAGGPGGGAGGPGGGLYG) are disordered. Positions 205 to 219 (GGPGGGAGGPGGGLY) are enriched in gly residues. The residue at position 270 (Lys-270) is an N6-acetyllysine. The segment covering 288-298 (RQRDKLYERRG) has biased composition (basic and acidic residues). The disordered stretch occupies residues 288–315 (RQRDKLYERRGGGSGGGDESEGEEVDED). An Omega-N-methylarginine modification is found at Arg-297. A phosphoserine mark is found at Ser-301 and Ser-307. A compositionally biased stretch (acidic residues) spans 305-315 (DESEGEEVDED).

Belongs to the PUR DNA-binding protein family. Homodimer, heterodimer with PURA and heterotrimer with PURA and YBX1/Y-box protein 1. Interacts with MYOCD and SRF. As to expression, expressed in muscle cells and in the liver.

The protein resides in the nucleus. Functionally, transcriptional regulator which can act as an activator or a repressor. Represses the transcription of ACTA2 in fibroblasts and smooth muscle cells via its ability to interact with the purine-rich strand of a MCAT- containing element in the 5' flanking region of the gene. Represses the transcription of MYOCD, capable of repressing all isoforms of MYOCD but the magnitude of the repressive effects is most notable for the SMC- specific isoforms. Promotes hepatic glucose production by activating the transcription of ADCY6, leading to cAMP accumulation, increased PKA activity, CREB activation, and increased transcription of PCK1 and G6PC genes. Has capacity to bind repeated elements in single-stranded DNA such as the purine-rich single strand of the PUR element located upstream of the MYC gene. Participates in transcriptional and translational regulation of alpha-MHC expression in cardiac myocytes by binding to the purine-rich negative regulatory (PNR) element. Modulates constitutive liver galectin-3 gene transcription by binding to its promoter. May play a role in the dendritic transport of a subset of mRNAs. This chain is Transcriptional regulator protein Pur-beta (Purb), found in Rattus norvegicus (Rat).